A 646-amino-acid polypeptide reads, in one-letter code: Acetyl-coenzyme A synthetase (646 aa).

Residues 190–193 (RAGN) and Thr-309 each bind CoA. ATP-binding positions include 385-387 (GEP), 409-414 (DTWWQT), Asp-498, and Arg-513. Residue Ser-521 coordinates CoA. ATP is bound at residue Arg-524. Mg(2+) contacts are provided by Val-535, His-537, and Val-540. Arg-582 provides a ligand contact to CoA. Residue Lys-607 is modified to N6-acetyllysine.

Belongs to the ATP-dependent AMP-binding enzyme family. The cofactor is Mg(2+). In terms of processing, acetylated. Deacetylation by the SIR2-homolog deacetylase activates the enzyme.

The enzyme catalyses acetate + ATP + CoA = acetyl-CoA + AMP + diphosphate. Catalyzes the conversion of acetate into acetyl-CoA (AcCoA), an essential intermediate at the junction of anabolic and catabolic pathways. AcsA undergoes a two-step reaction. In the first half reaction, AcsA combines acetate with ATP to form acetyl-adenylate (AcAMP) intermediate. In the second half reaction, it can then transfer the acetyl group from AcAMP to the sulfhydryl group of CoA, forming the product AcCoA. The chain is Acetyl-coenzyme A synthetase from Pseudoalteromonas translucida (strain TAC 125).